Consider the following 91-residue polypeptide: Elongation factor 1-beta (91 aa).

Belongs to the EF-1-beta/EF-1-delta family.

Promotes the exchange of GDP for GTP in EF-1-alpha/GDP, thus allowing the regeneration of EF-1-alpha/GTP that could then be used to form the ternary complex EF-1-alpha/GTP/AAtRNA. The chain is Elongation factor 1-beta (ef1b) from Pyrococcus horikoshii (strain ATCC 700860 / DSM 12428 / JCM 9974 / NBRC 100139 / OT-3).